We begin with the raw amino-acid sequence, 64 residues long: MKRIYQYFSLLSFTFSLYFGWLAYHHLAAEDMDQMYLNVSYCALFLSVMVFTFGMRDRKKTDKS.

2 helical membrane passes run 4 to 24 (IYQY…WLAY) and 35 to 55 (MYLN…TFGM).

It localises to the cell membrane. This is an uncharacterized protein from Bacillus subtilis (strain 168).